The sequence spans 361 residues: UDP-N-acetylglucosamine--N-acetylmuramyl-(pentapeptide) pyrophosphoryl-undecaprenol N-acetylglucosamine transferase (361 aa).

UDP-N-acetyl-alpha-D-glucosamine is bound by residues 11–13 (TGG), N124, R164, S192, and Q295.

Belongs to the glycosyltransferase 28 family. MurG subfamily.

It localises to the cell membrane. It carries out the reaction di-trans,octa-cis-undecaprenyl diphospho-N-acetyl-alpha-D-muramoyl-L-alanyl-D-glutamyl-meso-2,6-diaminopimeloyl-D-alanyl-D-alanine + UDP-N-acetyl-alpha-D-glucosamine = di-trans,octa-cis-undecaprenyl diphospho-[N-acetyl-alpha-D-glucosaminyl-(1-&gt;4)]-N-acetyl-alpha-D-muramoyl-L-alanyl-D-glutamyl-meso-2,6-diaminopimeloyl-D-alanyl-D-alanine + UDP + H(+). It functions in the pathway cell wall biogenesis; peptidoglycan biosynthesis. Cell wall formation. Catalyzes the transfer of a GlcNAc subunit on undecaprenyl-pyrophosphoryl-MurNAc-pentapeptide (lipid intermediate I) to form undecaprenyl-pyrophosphoryl-MurNAc-(pentapeptide)GlcNAc (lipid intermediate II). The sequence is that of UDP-N-acetylglucosamine--N-acetylmuramyl-(pentapeptide) pyrophosphoryl-undecaprenol N-acetylglucosamine transferase from Deinococcus geothermalis (strain DSM 11300 / CIP 105573 / AG-3a).